We begin with the raw amino-acid sequence, 483 residues long: Aspartyl/glutamyl-tRNA(Asn/Gln) amidotransferase subunit B (483 aa).

The protein belongs to the GatB/GatE family. GatB subfamily. In terms of assembly, heterotrimer of A, B and C subunits.

The enzyme catalyses L-glutamyl-tRNA(Gln) + L-glutamine + ATP + H2O = L-glutaminyl-tRNA(Gln) + L-glutamate + ADP + phosphate + H(+). It catalyses the reaction L-aspartyl-tRNA(Asn) + L-glutamine + ATP + H2O = L-asparaginyl-tRNA(Asn) + L-glutamate + ADP + phosphate + 2 H(+). Functionally, allows the formation of correctly charged Asn-tRNA(Asn) or Gln-tRNA(Gln) through the transamidation of misacylated Asp-tRNA(Asn) or Glu-tRNA(Gln) in organisms which lack either or both of asparaginyl-tRNA or glutaminyl-tRNA synthetases. The reaction takes place in the presence of glutamine and ATP through an activated phospho-Asp-tRNA(Asn) or phospho-Glu-tRNA(Gln). The chain is Aspartyl/glutamyl-tRNA(Asn/Gln) amidotransferase subunit B from Brachyspira hyodysenteriae (strain ATCC 49526 / WA1).